A 208-amino-acid polypeptide reads, in one-letter code: Large ribosomal subunit protein uL3 (208 aa).

The tract at residues 116–148 is disordered; it reads GFQGVIKRHGQSRGPMAHGSRYHRRPGSMGPVA.

This sequence belongs to the universal ribosomal protein uL3 family. Part of the 50S ribosomal subunit. Forms a cluster with proteins L14 and L19.

Functionally, one of the primary rRNA binding proteins, it binds directly near the 3'-end of the 23S rRNA, where it nucleates assembly of the 50S subunit. The protein is Large ribosomal subunit protein uL3 of Streptococcus pneumoniae (strain Hungary19A-6).